The primary structure comprises 121 residues: UPF0102 protein HRM2_30940 (121 aa).

The protein belongs to the UPF0102 family.

The polypeptide is UPF0102 protein HRM2_30940 (Desulforapulum autotrophicum (strain ATCC 43914 / DSM 3382 / VKM B-1955 / HRM2) (Desulfobacterium autotrophicum)).